The following is a 252-amino-acid chain: Nicotinamide/nicotinic acid mononucleotide adenylyltransferase 3 (252 aa).

NAD(+) contacts are provided by S14 and F15. Residues H22 and K56 each contribute to the ATP site. Residues W90, T93, G135, and D137 each contribute to the NAD(+) site. K140 is an ATP binding site. L147, W148, R167, and N198 together coordinate NAD(+). Residue 203-206 participates in ATP binding; sequence TYIR.

Belongs to the eukaryotic NMN adenylyltransferase family. As to quaternary structure, homotetramer. Requires Mg(2+) as cofactor. As to expression, expressed in lung and spleen with lower levels in placenta and kidney.

The protein localises to the mitochondrion. It carries out the reaction beta-nicotinamide D-ribonucleotide + ATP + H(+) = diphosphate + NAD(+). The catalysed reaction is nicotinate beta-D-ribonucleotide + ATP + H(+) = deamido-NAD(+) + diphosphate. Its pathway is cofactor biosynthesis; NAD(+) biosynthesis; NAD(+) from nicotinamide D-ribonucleotide: step 1/1. It participates in cofactor biosynthesis; NAD(+) biosynthesis; deamido-NAD(+) from nicotinate D-ribonucleotide: step 1/1. With respect to regulation, activity is strongly inhibited by galotannin. Inhibited by P1-(adenosine-5')-P4-(nicotinic-acid-riboside-5')-tetraphosphate (Nap4AD). Functionally, catalyzes the formation of NAD(+) from nicotinamide mononucleotide (NMN) and ATP. Can also use the deamidated form; nicotinic acid mononucleotide (NaMN) as substrate with the same efficiency. Can use triazofurin monophosphate (TrMP) as substrate. Can also use GTP and ITP as nucleotide donors. Also catalyzes the reverse reaction, i.e. the pyrophosphorolytic cleavage of NAD(+). For the pyrophosphorolytic activity, can use NAD(+), NADH, NaAD, nicotinic acid adenine dinucleotide phosphate (NHD), nicotinamide guanine dinucleotide (NGD) as substrates. Fails to cleave phosphorylated dinucleotides NADP(+), NADPH and NaADP(+). Protects against axonal degeneration following injury. May be involved in the maintenance of axonal integrity. Also functions as a stress-response chaperone protein that prevents toxic aggregation of proteins; this function may be independent of its NAD(+) synthesis activity. The protein is Nicotinamide/nicotinic acid mononucleotide adenylyltransferase 3 of Homo sapiens (Human).